The chain runs to 239 residues: Insulin-like growth factor-binding protein 3 receptor (239 aa).

A signal peptide spans 1–38 (MGSCQAGHYLHFCLAHHPPLVCATLILLLLGLSGLGLG). Over 39–205 (GFLLTHRTDL…EELTLCGSRL (167 aa)) the chain is Extracellular. Asn-101 and Asn-167 each carry an N-linked (GlcNAc...) asparagine glycan. Residues 206 to 226 (LVLGFFLILFCGLCCLTAACF) traverse the membrane as a helical segment. Topologically, residues 227–239 (HPRRESHWSRTRL) are cytoplasmic.

Interacts with IGFBP3. Interacts with CASP8.

It localises to the cell membrane. In terms of biological role, cell death receptor specific for IGFBP3, may mediate caspase-8-dependent apoptosis upon ligand binding. In Bos taurus (Bovine), this protein is Insulin-like growth factor-binding protein 3 receptor (TMEM219).